Here is a 260-residue protein sequence, read N- to C-terminus: Histidine-binding periplasmic protein (260 aa).

The N-terminal stretch at 1–22 (MKKLALSLSLVLAFSSATAAFA) is a signal peptide. An intrachain disulfide couples C60 to C67. 6 residues coordinate L-histidine: S91, S92, S94, R99, T143, and D183.

It belongs to the bacterial solute-binding protein 3 family. The complex is composed of two ATP-binding proteins (HisP), two transmembrane proteins (HisM and HisQ) and a solute-binding protein (HisJ).

It is found in the periplasm. Part of the ABC transporter complex HisPMQJ involved in histidine transport. Binds histidine. Interacts with HisQMP and stimulates ATPase activity of HisP, which results in histidine translocation. May have some additional function(s) in translocation that is independent of the stimulation of ATP hydrolysis. In Salmonella typhimurium (strain LT2 / SGSC1412 / ATCC 700720), this protein is Histidine-binding periplasmic protein.